A 446-amino-acid chain; its full sequence is Tol-Pal system protein TolB (446 aa).

A signal peptide spans 1–24; that stretch reads MKRAFLSALSVGLAALFLTGPAQA.

Belongs to the TolB family. As to quaternary structure, the Tol-Pal system is composed of five core proteins: the inner membrane proteins TolA, TolQ and TolR, the periplasmic protein TolB and the outer membrane protein Pal. They form a network linking the inner and outer membranes and the peptidoglycan layer.

The protein resides in the periplasm. In terms of biological role, part of the Tol-Pal system, which plays a role in outer membrane invagination during cell division and is important for maintaining outer membrane integrity. The sequence is that of Tol-Pal system protein TolB from Dinoroseobacter shibae (strain DSM 16493 / NCIMB 14021 / DFL 12).